The sequence spans 122 residues: Basic phospholipase A2 PLA-B (122 aa).

Disulfide bonds link cysteine 26–cysteine 115, cysteine 28–cysteine 44, cysteine 43–cysteine 95, cysteine 49–cysteine 122, cysteine 50–cysteine 88, cysteine 57–cysteine 81, and cysteine 75–cysteine 86. Residues tyrosine 27, glycine 29, and glycine 31 each coordinate Ca(2+). The active site involves histidine 47. Residue aspartate 48 participates in Ca(2+) binding. Aspartate 89 is an active-site residue.

This sequence belongs to the phospholipase A2 family. Group II subfamily. D49 sub-subfamily. It depends on Ca(2+) as a cofactor. In terms of tissue distribution, expressed by the venom gland.

It localises to the secreted. It carries out the reaction a 1,2-diacyl-sn-glycero-3-phosphocholine + H2O = a 1-acyl-sn-glycero-3-phosphocholine + a fatty acid + H(+). Snake venom phospholipase A2 (PLA2) that displays edema-inducing activities. PLA-B is three times more active than PLA-A in edema-inducing activities. PLA2 catalyzes the calcium-dependent hydrolysis of the 2-acyl groups in 3-sn-phosphoglycerides. The sequence is that of Basic phospholipase A2 PLA-B from Protobothrops flavoviridis (Habu).